Reading from the N-terminus, the 556-residue chain is F-box protein YDR131C (556 aa).

In terms of domain architecture, F-box spans 1 to 44 (MFDKLPYEIFKQIAWRIPQEDKISLTYVCKRSYESIIPFIYQNL).

Interacts with SKP1. Component of the probable SCF(YDR131C) complex containing CDC53, SKP1, RBX1 and YDR131C.

It is found in the vacuole. It functions in the pathway protein modification; protein ubiquitination. Functionally, substrate recognition component of a SCF (SKP1-CUL1-F-box protein) E3 ubiquitin-protein ligase complex which mediates the ubiquitination and subsequent proteasomal degradation of target proteins. Probably recognizes and binds to phosphorylated target proteins. This Saccharomyces cerevisiae (strain ATCC 204508 / S288c) (Baker's yeast) protein is F-box protein YDR131C.